A 126-amino-acid polypeptide reads, in one-letter code: Glycine--tRNA ligase beta subunit (126 aa).

It belongs to the class-II aminoacyl-tRNA synthetase family. As to quaternary structure, tetramer of two alpha and two beta subunits.

The protein resides in the cytoplasm. The catalysed reaction is tRNA(Gly) + glycine + ATP = glycyl-tRNA(Gly) + AMP + diphosphate. The protein is Glycine--tRNA ligase beta subunit (glyS) of Neisseria gonorrhoeae.